We begin with the raw amino-acid sequence, 94 residues long: uncharacterized protein (94 aa).

A helical membrane pass occupies residues 13–33; sequence IVICLTTIISVTIFYILVSFF.

The protein localises to the membrane. This is an uncharacterized protein from Dictyostelium discoideum (Social amoeba).